The sequence spans 63 residues: Protein CYSTEINE-RICH TRANSMEMBRANE MODULE 12 (63 aa).

Residues 1-34 form a disordered region; that stretch reads MQDMRDQNPPQGYPAAEQVSEQPGQDKKKKKPRF. The chain crosses the membrane as a helical span at residues 40–56; sequence KGDRGFIEGCLFALCCC.

It belongs to the CYSTM1 family. Homodimer and heterodimers. Binds weakly to CYSTM4, CYSTM6 and CYSTM7. In terms of tissue distribution, mostly expressed in roots, flowers and siliques and, to a lower extent, in stems and leaves.

It localises to the cell membrane. Its subcellular location is the cytoplasm. Its function is as follows. Involved in resistance to abiotic stress. In Arabidopsis thaliana (Mouse-ear cress), this protein is Protein CYSTEINE-RICH TRANSMEMBRANE MODULE 12.